Here is a 526-residue protein sequence, read N- to C-terminus: Thioredoxin reductase 2, mitochondrial (526 aa).

The N-terminal 36 residues, 1–36, are a transit peptide targeting the mitochondrion; sequence MAAIVAALRGSSGRFRPQTRVLTRGTRGAAGAASAA. An FAD-binding site is contributed by 43–72; it reads DLLVIGGGSGGLACAKEAAQLGRKVAVADY. Residue K81 is modified to N6-succinyllysine. C88 and C93 are joined by a disulfide. An N6-succinyllysine mark is found at K177 and K331. Residue H499 is the Proton acceptor of the active site. The cysteinyl-selenocysteine (Cys-Sec) cross-link spans 524–525; it reads CU. U525 is a non-standard amino acid (selenocysteine).

This sequence belongs to the class-I pyridine nucleotide-disulfide oxidoreductase family. Homodimer. It depends on FAD as a cofactor. Expressed in liver, kidney, adrenal gland and heart.

It is found in the mitochondrion. It carries out the reaction [thioredoxin]-dithiol + NADP(+) = [thioredoxin]-disulfide + NADPH + H(+). In terms of biological role, involved in the control of reactive oxygen species levels and the regulation of mitochondrial redox homeostasis. Maintains mitochondrial thioredoxin in a reduced state. May play a role in redox-regulated cell signaling. This chain is Thioredoxin reductase 2, mitochondrial (Txnrd2), found in Rattus norvegicus (Rat).